We begin with the raw amino-acid sequence, 319 residues long: Cobalamin biosynthesis protein CobD (319 aa).

The next 4 membrane-spanning stretches (helical) occupy residues 55–75 (AVMW…VLAL), 78–98 (EIHP…VLAG), 153–173 (VDGI…LAMA), and 296–316 (LMWV…CLLV).

Belongs to the CobD/CbiB family.

The protein resides in the cell membrane. Its pathway is cofactor biosynthesis; adenosylcobalamin biosynthesis. Converts cobyric acid to cobinamide by the addition of aminopropanol on the F carboxylic group. The chain is Cobalamin biosynthesis protein CobD from Citrobacter koseri (strain ATCC BAA-895 / CDC 4225-83 / SGSC4696).